The sequence spans 95 residues: MANIKSQIKRNRTNENNRLRNKAVKSELKTLIRLVKRAARDNDLPRAEDALRRASLKLDRAVSKGVIHPNQAANRKSGIAKLVVATRLRNSTAGE.

The tract at residues 1–22 is disordered; it reads MANIKSQIKRNRTNENNRLRNK. Residues 12–22 show a composition bias toward basic and acidic residues; that stretch reads RTNENNRLRNK.

It belongs to the bacterial ribosomal protein bS20 family.

Its function is as follows. Binds directly to 16S ribosomal RNA. The polypeptide is Small ribosomal subunit protein bS20 (Tropheryma whipplei (strain TW08/27) (Whipple's bacillus)).